We begin with the raw amino-acid sequence, 20 residues long: Agglutinin beta-1 chain (20 aa).

Positions 1 to 11 are enriched in polar residues; that stretch reads NEQSGKSQTVI. The tract at residues 1 to 20 is disordered; the sequence is NEQSGKSQTVIVGSWGAKVS.

The protein belongs to the jacalin lectin family. Tetramer of four alpha chains associated with two or four beta chains.

Functionally, D-galactose-specific lectin, binds the T-antigen structure Gal-beta1,3-GalNAc (Thomsen-Friedenreich-antigen-specific lectin). Potent and selective stimulant of distinct T- and B-cell functions. Shows a unique ability to specifically recognize IgA-1 from human serum. This chain is Agglutinin beta-1 chain, found in Artocarpus integer (Jack fruit).